A 168-amino-acid chain; its full sequence is Chorismate pyruvate-lyase (168 aa).

4 residues coordinate substrate: Met-36, Arg-78, Leu-116, and Glu-157.

This sequence belongs to the UbiC family. Monomer.

The protein resides in the cytoplasm. The catalysed reaction is chorismate = 4-hydroxybenzoate + pyruvate. It participates in cofactor biosynthesis; ubiquinone biosynthesis. Removes the pyruvyl group from chorismate, with concomitant aromatization of the ring, to provide 4-hydroxybenzoate (4HB) for the ubiquinone pathway. The sequence is that of Chorismate pyruvate-lyase from Yersinia enterocolitica serotype O:8 / biotype 1B (strain NCTC 13174 / 8081).